A 435-amino-acid polypeptide reads, in one-letter code: MRGTRVTETASAPRMAPGPPTLDDPWPVALLASKIRGWIERLGTAWVEGEITQWGVSGGNVYGKLKDLNEDATVGFTIWSSVKARIPADLKQGDRVIAAVKPNYWLKGGTLTMQVSDMRHVGLGDLLERLERLRAQLRAEGLFRPERKKRLPFLPHTIGLVTGKDSDAEKDVLRNAQLRWPQVRFRTVYAAVQGDRTVPEVTAALRELDADPEVEVIIVARGGGDFQNLLGFSDESLLRAAAGLSTPLVSAIGHEADRPLLDEVADLRASTPTDAAKRVVPDVAEELVRVHQARARIGTRLTHIIRHEIDRIGHLRTRPALASGSWIVDSRAQDLTRFVARGAELVERCVDREAARVAELRGQLRALSPQATLERGYAIVQNAAGRVVAAPGEAPAGTELRITVSGGSLAATAGKALPSPAQGATNGSLAAPRGK.

A compositionally biased stretch (polar residues) spans M1–A10. Disordered stretches follow at residues M1–T21 and A413–K435.

Belongs to the XseA family. Heterooligomer composed of large and small subunits.

It localises to the cytoplasm. It catalyses the reaction Exonucleolytic cleavage in either 5'- to 3'- or 3'- to 5'-direction to yield nucleoside 5'-phosphates.. Functionally, bidirectionally degrades single-stranded DNA into large acid-insoluble oligonucleotides, which are then degraded further into small acid-soluble oligonucleotides. This is Exodeoxyribonuclease 7 large subunit from Leifsonia xyli subsp. xyli (strain CTCB07).